Consider the following 534-residue polypeptide: CD276 antigen (534 aa).

A signal peptide spans 1-28 (MLRRRGSPGMGVHVGAALGALWFCLTGA). An Ig-like V-type 1 domain is found at 29–139 (LEVQVPEDPV…GSAAVSLQVA (111 aa)). The Extracellular portion of the chain corresponds to 29–466 (LEVQVPEDPV…GQPMTFPPEA (438 aa)). 4 disulfide bridges follow: cysteine 50–cysteine 122, cysteine 165–cysteine 220, cysteine 268–cysteine 340, and cysteine 383–cysteine 438. 6 N-linked (GlcNAc...) asparagine glycosylation sites follow: asparagine 104, asparagine 189, asparagine 215, asparagine 322, asparagine 407, and asparagine 433. In terms of domain architecture, Ig-like C2-type 1 spans 145–238 (PSMTLEPNKD…QDAHSSVTIT (94 aa)). An Ig-like V-type 2 domain is found at 243 to 357 (PTGAVEVQVP…GSAAVSLQVA (115 aa)). The region spanning 363–456 (PSMTLEPNKD…QDAHGSVTIT (94 aa)) is the Ig-like C2-type 2 domain. A helical membrane pass occupies residues 467 to 487 (LWVTVGLSVCLIALLVALAFV). The Cytoplasmic segment spans residues 488-534 (CWRKIKQSCEEENAGAEDQDGEGEGSKTALQPLKHSDSKEDDGQEIA). Residues 498–510 (EENAGAEDQDGEG) are compositionally biased toward acidic residues. The tract at residues 498–534 (EENAGAEDQDGEGEGSKTALQPLKHSDSKEDDGQEIA) is disordered. Serine 525 carries the phosphoserine modification.

Belongs to the immunoglobulin superfamily. BTN/MOG family. As to quaternary structure, interacts with TREML2 and this interaction enhances T-cell activation. As to expression, ubiquitous but not detectable in peripheral blood lymphocytes or granulocytes. Weakly expressed in resting monocytes. Expressed in dendritic cells derived from monocytes. Expressed in epithelial cells of sinonasal tissue. Expressed in extravillous trophoblast cells and Hofbauer cells of the first trimester placenta and term placenta.

It is found in the membrane. Functionally, may participate in the regulation of T-cell-mediated immune response. May play a protective role in tumor cells by inhibiting natural-killer mediated cell lysis as well as a role of marker for detection of neuroblastoma cells. May be involved in the development of acute and chronic transplant rejection and in the regulation of lymphocytic activity at mucosal surfaces. Could also play a key role in providing the placenta and fetus with a suitable immunological environment throughout pregnancy. Both isoform 1 and isoform 2 appear to be redundant in their ability to modulate CD4 T-cell responses. Isoform 2 is shown to enhance the induction of cytotoxic T-cells and selectively stimulates interferon gamma production in the presence of T-cell receptor signaling. The protein is CD276 antigen (CD276) of Homo sapiens (Human).